The sequence spans 56 residues: Mitoregulin (56 aa).

Topologically, residues 2–9 (ADVSERTL) are mitochondrial matrix. A helical transmembrane segment spans residues 10–27 (QVSVLVAFASGVVLGWQA). Residues 28-56 (NRLRRRYLDWRKRRLQDKLATTQKKLDLA) are Mitochondrial intermembrane-facing.

Belongs to the mitoregulin family. Interacts with mitochondrial trifunctional enzyme, a heterotetrameric complex composed of 2 HADHA subunits and 2 HADHB subunits. Interacts with cytochrome b5 reductase CYB5R3; the interaction is required to maintain cellular lipid composition and leads to stimulation of mitochondrial respiratory complex I activity. Interacts with ATP synthase subunit ATP5F1B/ATP5B. As to expression, enriched in heart and skeletal muscle (at protein level). Also enriched in adipose tissue with lower levels detected in liver, pancreas and brain (at protein level). Higher levels in differentiated myotubes than in satellite cells.

It is found in the mitochondrion inner membrane. Positively regulates mitochondrial complex assembly and/or stability. Increases mitochondrial membrane potential while decreasing mitochondrial reactive oxygen species. Increases mitochondrial respiration rate. Increased mitochondrial respiratory activity promotes myogenic differentiation which facilitates muscle growth and regeneration. Increases mitochondrial calcium retention capacity. Plays a role in maintenance of cellular lipid composition through its interaction with cytochrome b5 reductase CYB5R3 which is required for mitochondrial respiratory complex I activity. Interacts with the mitochondrial trifunctional enzyme complex (MTE) and enhances fatty acid beta-oxidation. Not required for MTE formation or stability. Modulates triglyceride clearance in adipocytes through its role in regulating fatty acid beta-oxidation and lipolysis. This is Mitoregulin from Mus musculus (Mouse).